The following is a 176-amino-acid chain: NAD(P)H-quinone oxidoreductase subunit J (176 aa).

Polar residues-rich tracts occupy residues 1–12 and 20–30; these read MEKDSQATSSDT and ISQSLSKDGIP. The segment at 1–30 is disordered; that stretch reads MEKDSQATSSDTSIEKEGVISQSLSKDGIP.

It belongs to the complex I 30 kDa subunit family. NDH-1 can be composed of about 15 different subunits; different subcomplexes with different compositions have been identified which probably have different functions.

It localises to the cellular thylakoid membrane. It catalyses the reaction a plastoquinone + NADH + (n+1) H(+)(in) = a plastoquinol + NAD(+) + n H(+)(out). It carries out the reaction a plastoquinone + NADPH + (n+1) H(+)(in) = a plastoquinol + NADP(+) + n H(+)(out). Its function is as follows. NDH-1 shuttles electrons from an unknown electron donor, via FMN and iron-sulfur (Fe-S) centers, to quinones in the respiratory and/or the photosynthetic chain. The immediate electron acceptor for the enzyme in this species is believed to be plastoquinone. Couples the redox reaction to proton translocation, and thus conserves the redox energy in a proton gradient. Cyanobacterial NDH-1 also plays a role in inorganic carbon-concentration. This is NAD(P)H-quinone oxidoreductase subunit J from Prochlorococcus marinus (strain AS9601).